The chain runs to 413 residues: Serine/threonine transporter SstT (413 aa).

Helical transmembrane passes span 11 to 31 (IANG…VILA), 43 to 63 (FLGS…VFVL), 82 to 102 (IIGL…LFSF), 141 to 161 (ALLT…GITM), 192 to 212 (IGIF…ALAG), 216 to 236 (LLMV…PIIV), 298 to 318 (MGGA…TLGI), 339 to 359 (ASGV…LFGI), and 363 to 383 (VAMQ…SAET).

This sequence belongs to the dicarboxylate/amino acid:cation symporter (DAACS) (TC 2.A.23) family.

Its subcellular location is the cell inner membrane. It catalyses the reaction L-serine(in) + Na(+)(in) = L-serine(out) + Na(+)(out). The catalysed reaction is L-threonine(in) + Na(+)(in) = L-threonine(out) + Na(+)(out). Functionally, involved in the import of serine and threonine into the cell, with the concomitant import of sodium (symport system). The chain is Serine/threonine transporter SstT from Shewanella frigidimarina (strain NCIMB 400).